Here is a 164-residue protein sequence, read N- to C-terminus: Endoribonuclease YbeY (164 aa).

Positions 114, 118, and 124 each coordinate Zn(2+).

It belongs to the endoribonuclease YbeY family. Zn(2+) serves as cofactor.

Its subcellular location is the cytoplasm. Single strand-specific metallo-endoribonuclease involved in late-stage 70S ribosome quality control and in maturation of the 3' terminus of the 16S rRNA. This is Endoribonuclease YbeY from Mycoplasmoides gallisepticum (strain R(low / passage 15 / clone 2)) (Mycoplasma gallisepticum).